A 444-amino-acid polypeptide reads, in one-letter code: Transcription factor PIF5 (444 aa).

The segment at 26 to 39 (EDELVELLWRDGQV) is involved in interaction with phyB. Disordered stretches follow at residues 154-265 (HCGS…NLSE) and 416-444 (MLGF…GKIG). Residues 155–171 (CGSNQSTNIHQATTLPV) are compositionally biased toward polar residues. The span at 175–185 (DRSKNVEERLD) shows a compositional bias: basic and acidic residues. A compositionally biased stretch (low complexity) spans 187-197 (SSGGSSGCSYG). The segment covering 224-244 (ESVSQSDIGLTSTDDQTMGNK) has biased composition (polar residues). A compositionally biased stretch (basic and acidic residues) spans 256–265 (RAAEVHNLSE). The 50-residue stretch at 256–305 (RAAEVHNLSERRRRDRINERMKALQELIPHCSRTDKASILDEAIDYLKSL) folds into the bHLH domain. The segment covering 424–437 (GPQSQLSAPATTDS) has biased composition (polar residues). Residue Ser-437 is modified to Phosphoserine.

In terms of assembly, homodimer. Interacts specifically with the Pfr form of phytochrome B and with TOC1/APRR1. May form a heterodimer with PIF3. Interacts with PHYB, CRY1 and CRY2 in the nucleus in response to low blue light (LBL). Interacts with TOPP4. Associates to PTAC12/HMR/PAP5 which acts as a transcriptional coactivator. Post-translationally, phosphorylated. Additional phosphorylations induced within 60 seconds following phytochrome B photoactivation. In terms of processing, dephosphorylated by TOPP4 during photomorphogenesis, leading to subsequent degradation of PIF5 by the proteasomal pathway. In terms of tissue distribution, mainly expressed in leaves and seedlings, and, to a lower extent, in stems, fruits, flowers and roots.

Its subcellular location is the nucleus. In terms of biological role, transcription factor acting negatively in the phytochrome B signaling pathway to promote the shade-avoidance response. Regulates PHYB abundance at the post-transcriptional level, possibly via the ubiquitin-proteasome pathway. Promotes ethylene activity in the dark. May regulate the expression of a subset of genes by binding to the G-box motif. Might be involved in the integration of light-signals to control both circadian and photomorphogenic processes. Activated by CRY1 and CRY2 in response to low blue light (LBL) by direct binding at chromatin on E-box variant 5'-CA[CT]GTG-3' to stimulate specific gene expression to adapt global physiology (e.g. hypocotyl elongation in low blue light). The polypeptide is Transcription factor PIF5 (Arabidopsis thaliana (Mouse-ear cress)).